The sequence spans 205 residues: Large ribosomal subunit protein uL4 (205 aa).

A disordered region spans residues 45-97 (RQGTSAVKNRSAVRGGGKKPWRQKGTGRARQGSIRAPQWRGGGTVFGPTPRSY). Basic residues predominate over residues 60-71 (GGKKPWRQKGTG).

Belongs to the universal ribosomal protein uL4 family. Part of the 50S ribosomal subunit.

Functionally, one of the primary rRNA binding proteins, this protein initially binds near the 5'-end of the 23S rRNA. It is important during the early stages of 50S assembly. It makes multiple contacts with different domains of the 23S rRNA in the assembled 50S subunit and ribosome. Its function is as follows. Forms part of the polypeptide exit tunnel. In Lactobacillus gasseri (strain ATCC 33323 / DSM 20243 / BCRC 14619 / CIP 102991 / JCM 1131 / KCTC 3163 / NCIMB 11718 / NCTC 13722 / AM63), this protein is Large ribosomal subunit protein uL4.